Consider the following 73-residue polypeptide: Large ribosomal subunit protein bL31 (73 aa).

It belongs to the bacterial ribosomal protein bL31 family. Type A subfamily. Part of the 50S ribosomal subunit.

In terms of biological role, binds the 23S rRNA. This Cereibacter sphaeroides (strain ATCC 17025 / ATH 2.4.3) (Rhodobacter sphaeroides) protein is Large ribosomal subunit protein bL31.